The primary structure comprises 223 residues: Cytidylate kinase (223 aa).

A disordered region spans residues 1–23 (MSTSPLVIAIDGPSGSGKSSTSR). 12 to 20 (GPSGSGKSS) is an ATP binding site.

Belongs to the cytidylate kinase family. Type 1 subfamily.

It localises to the cytoplasm. The catalysed reaction is CMP + ATP = CDP + ADP. It catalyses the reaction dCMP + ATP = dCDP + ADP. This chain is Cytidylate kinase, found in Cutibacterium acnes (strain DSM 16379 / KPA171202) (Propionibacterium acnes).